Reading from the N-terminus, the 320-residue chain is ATP-dependent 6-phosphofructokinase (320 aa).

ATP is bound at residue G11. Residue 21–25 (RAVVR) coordinates ADP. ATP is bound by residues 72 to 73 (RY) and 102 to 105 (GDGS). Residue D103 coordinates Mg(2+). Position 125–127 (125–127 (TID)) interacts with substrate. The Proton acceptor role is filled by D127. R154 contacts ADP. Residues R162 and 169–171 (MGR) each bind substrate. ADP contacts are provided by residues 185-187 (GAD), R211, and 213-215 (KKH). Residues E222, R243, and 249–252 (HVVR) each bind substrate.

Belongs to the phosphofructokinase type A (PFKA) family. ATP-dependent PFK group I subfamily. Prokaryotic clade 'B1' sub-subfamily. Homotetramer. The cofactor is Mg(2+).

It is found in the cytoplasm. It catalyses the reaction beta-D-fructose 6-phosphate + ATP = beta-D-fructose 1,6-bisphosphate + ADP + H(+). The protein operates within carbohydrate degradation; glycolysis; D-glyceraldehyde 3-phosphate and glycerone phosphate from D-glucose: step 3/4. With respect to regulation, allosterically activated by ADP and other diphosphonucleosides, and allosterically inhibited by phosphoenolpyruvate. Functionally, catalyzes the phosphorylation of D-fructose 6-phosphate to fructose 1,6-bisphosphate by ATP, the first committing step of glycolysis. This chain is ATP-dependent 6-phosphofructokinase, found in Enterococcus faecalis (strain ATCC 700802 / V583).